The sequence spans 416 residues: Putative cell agglutination protein SPAC1348.08c (416 aa).

An N-terminal signal peptide occupies residues Met1–Ala27. Residue Asn19 is glycosylated (N-linked (GlcNAc...) asparagine). A run of 2 repeats spans residues Gly90 to Ala124 and Gly125 to Asn160. The interval Gly90 to Asn160 is 2 X 36 AA approximate tandem repeats. Positions Phe224–Tyr390 constitute a PA14 domain. The N-linked (GlcNAc...) asparagine glycan is linked to Asn344.

The protein localises to the cell surface. Its function is as follows. May be involved in agglutination during conjugation or other aspects of colony formation. The sequence is that of Putative cell agglutination protein SPAC1348.08c from Schizosaccharomyces pombe (strain 972 / ATCC 24843) (Fission yeast).